Reading from the N-terminus, the 357-residue chain is DNA replication and repair protein RecF (357 aa).

An ATP-binding site is contributed by 31 to 38 (GQNGAGKT).

Belongs to the RecF family.

It is found in the cytoplasm. In terms of biological role, the RecF protein is involved in DNA metabolism; it is required for DNA replication and normal SOS inducibility. RecF binds preferentially to single-stranded, linear DNA. It also seems to bind ATP. This is DNA replication and repair protein RecF from Coxiella burnetii (strain CbuK_Q154) (Coxiella burnetii (strain Q154)).